Reading from the N-terminus, the 430-residue chain is F-box protein At1g49990 (430 aa).

The region spanning 1-45 is the F-box domain; it reads METGRRRTIPEVEILARLPLRSIARFKSVCKRWKSVIESDYFRRL.

This chain is F-box protein At1g49990, found in Arabidopsis thaliana (Mouse-ear cress).